Here is a 588-residue protein sequence, read N- to C-terminus: Adenine deaminase (588 aa).

Belongs to the metallo-dependent hydrolases superfamily. Adenine deaminase family. Homodimer. It depends on Mn(2+) as a cofactor.

The enzyme catalyses adenine + H2O + H(+) = hypoxanthine + NH4(+). This chain is Adenine deaminase, found in Escherichia coli O6:H1 (strain CFT073 / ATCC 700928 / UPEC).